We begin with the raw amino-acid sequence, 493 residues long: Mitochondrial distribution and morphology protein 10 (493 aa).

The protein belongs to the MDM10 family. Component of the ER-mitochondria encounter structure (ERMES) or MDM complex, composed of MMM1, MDM10, MDM12 and MDM34. Associates with the mitochondrial outer membrane sorting assembly machinery SAM(core) complex, which consists of SAM35, SAM37 and SAM50, to form a SAM(holo) complex.

It is found in the mitochondrion outer membrane. Component of the ERMES/MDM complex, which serves as a molecular tether to connect the endoplasmic reticulum and mitochondria. Components of this complex are involved in the control of mitochondrial shape and protein biogenesis and may function in phospholipid exchange. MDM10 is involved in the late assembly steps of the general translocase of the mitochondrial outer membrane (TOM complex). Functions in the TOM40-specific route of the assembly of outer membrane beta-barrel proteins, including the association of TOM40 with the receptor TOM22 and small TOM proteins. Can associate with the SAM(core) complex as well as the MDM12-MMM1 complex, both involved in late steps of the major beta-barrel assembly pathway, that is responsible for biogenesis of all outer membrane beta-barrel proteins. May act as a switch that shuttles between both complexes and channels precursor proteins into the TOM40-specific pathway. Plays a role in mitochondrial morphology and in the inheritance of mitochondria. The polypeptide is Mitochondrial distribution and morphology protein 10 (Saccharomyces cerevisiae (strain ATCC 204508 / S288c) (Baker's yeast)).